Reading from the N-terminus, the 299-residue chain is Ent-kaurene oxidase-like protein 1 (299 aa).

The helical transmembrane segment at 16-36 (AVVGVFVAAAVVGGFVAAVAL) threads the bilayer.

This sequence belongs to the cytochrome P450 family. As to expression, expressed in roots and panicles.

The protein localises to the membrane. In Oryza sativa subsp. japonica (Rice), this protein is Ent-kaurene oxidase-like protein 1.